A 107-amino-acid polypeptide reads, in one-letter code: Phosphoribosyl-ATP pyrophosphatase (107 aa).

This sequence belongs to the PRA-PH family.

The protein resides in the cytoplasm. It catalyses the reaction 1-(5-phospho-beta-D-ribosyl)-ATP + H2O = 1-(5-phospho-beta-D-ribosyl)-5'-AMP + diphosphate + H(+). It participates in amino-acid biosynthesis; L-histidine biosynthesis; L-histidine from 5-phospho-alpha-D-ribose 1-diphosphate: step 2/9. This is Phosphoribosyl-ATP pyrophosphatase from Bacillus cereus (strain ZK / E33L).